The following is a 61-amino-acid chain: Large ribosomal subunit protein uL30 (61 aa).

This sequence belongs to the universal ribosomal protein uL30 family. As to quaternary structure, part of the 50S ribosomal subunit.

This is Large ribosomal subunit protein uL30 from Petrotoga mobilis (strain DSM 10674 / SJ95).